The sequence spans 461 residues: Steroidogenic factor 1 (461 aa).

Positions 10–85 (DELCPVCGDK…VGMRLEAVRA (76 aa)) form a DNA-binding region, nuclear receptor. The segment at 13–33 (CPVCGDKVSGYHYGLLTCESC) adopts an NR C4-type zinc-finger fold. N6-acetyllysine is present on residues Lys-34, Lys-38, and Lys-72. The segment at 49-73 (CTESQSCKIDKTLRKRCPFCRFQKC) adopts an NR C4-type zinc-finger fold. Lys-119 is covalently cross-linked (Glycyl lysine isopeptide (Lys-Gly) (interchain with G-Cter in SUMO)). A disordered region spans residues 119-153 (KLETGPPMGVPPPPPPPPDYMLPPGLHVPEPKGLA). The segment covering 126-139 (MGVPPPPPPPPDYM) has biased composition (pro residues). A Glycyl lysine isopeptide (Lys-Gly) (interchain with G-Cter in SUMO) cross-link involves residue Lys-194. Residue Ser-203 is modified to Phosphoserine; by CDK7. The region spanning 222–459 (GVPELILQLL…NLLIEMLQAK (238 aa)) is the NR LBD domain. Positions 341, 436, and 440 each coordinate a 1,2-diacyl-sn-glycero-3-phosphocholine.

It belongs to the nuclear hormone receptor family. NR5 subfamily. As to quaternary structure, binds DNA as a monomer. Part of a complex consisting of SFPQ, NONO and NR5A1. Interacts with NR0B2. Interacts with DGKQ and CDK7. Binds to and activated by HIPK3. Post-translationally, acetylation stimulates the transcriptional activity. Sumoylation reduces CDK7-mediated phosphorylation on Ser-203. In terms of processing, phosphorylated on Ser-203 by CDK7. This phosphorylation promotes transcriptional activity.

The protein resides in the nucleus. Transcriptional activator. Seems to be essential for sexual differentiation and formation of the primary steroidogenic tissues. Binds to the Ad4 site found in the promoter region of steroidogenic P450 genes such as CYP11A, CYP11B and CYP21B. Also regulates the AMH/Muellerian inhibiting substance gene as well as the AHCH and STAR genes. 5'-YCAAGGYC-3' and 5'-RRAGGTCA-3' are the consensus sequences for the recognition by NR5A1. The SFPQ-NONO-NR5A1 complex binds to the CYP17 promoter and regulates basal and cAMP-dependent transcriptional activity. Binds phospholipids with a phosphatidylinositol (PI) headgroup, in particular PI(3,4)P2 and PI(3,4,5)P3. Activated by the phosphorylation of NR5A1 by HIPK3 leading to increased steroidogenic gene expression upon cAMP signaling pathway stimulation. The chain is Steroidogenic factor 1 (NR5A1) from Equus caballus (Horse).